The primary structure comprises 222 residues: Large ribosomal subunit protein uL4 (222 aa).

The segment at 50–72 (TRGRSEVSHSTKKPFRQKGTGNA) is disordered.

It belongs to the universal ribosomal protein uL4 family. In terms of assembly, part of the 50S ribosomal subunit.

Functionally, one of the primary rRNA binding proteins, this protein initially binds near the 5'-end of the 23S rRNA. It is important during the early stages of 50S assembly. It makes multiple contacts with different domains of the 23S rRNA in the assembled 50S subunit and ribosome. In terms of biological role, forms part of the polypeptide exit tunnel. This chain is Large ribosomal subunit protein uL4, found in Chlamydia trachomatis serovar A (strain ATCC VR-571B / DSM 19440 / HAR-13).